The following is a 142-amino-acid chain: Ribosome maturation factor RimP (142 aa).

This sequence belongs to the RimP family.

It localises to the cytoplasm. Its function is as follows. Required for maturation of 30S ribosomal subunits. This chain is Ribosome maturation factor RimP, found in Nitratiruptor sp. (strain SB155-2).